The sequence spans 513 residues: ATP synthase subunit alpha (513 aa).

169 to 176 (GDRQTGKT) lines the ATP pocket.

It belongs to the ATPase alpha/beta chains family. F-type ATPases have 2 components, CF(1) - the catalytic core - and CF(0) - the membrane proton channel. CF(1) has five subunits: alpha(3), beta(3), gamma(1), delta(1), epsilon(1). CF(0) has three main subunits: a(1), b(2) and c(9-12). The alpha and beta chains form an alternating ring which encloses part of the gamma chain. CF(1) is attached to CF(0) by a central stalk formed by the gamma and epsilon chains, while a peripheral stalk is formed by the delta and b chains.

It is found in the cell inner membrane. It catalyses the reaction ATP + H2O + 4 H(+)(in) = ADP + phosphate + 5 H(+)(out). Its function is as follows. Produces ATP from ADP in the presence of a proton gradient across the membrane. The alpha chain is a regulatory subunit. This is ATP synthase subunit alpha from Salmonella arizonae (strain ATCC BAA-731 / CDC346-86 / RSK2980).